Reading from the N-terminus, the 58-residue chain is Large ribosomal subunit protein eL24 (58 aa).

Positions 6, 9, 32, and 36 each coordinate Zn(2+). The C4-type zinc-finger motif lies at 6–36; sequence CAFCGADILPGYGIMYVKTDGTTLRFCSRKC.

It belongs to the eukaryotic ribosomal protein eL24 family. As to quaternary structure, part of the 50S ribosomal subunit. Forms a cluster with proteins L3 and L14. Zn(2+) serves as cofactor.

Its function is as follows. Binds to the 23S rRNA. The chain is Large ribosomal subunit protein eL24 from Pyrobaculum islandicum (strain DSM 4184 / JCM 9189 / GEO3).